The primary structure comprises 298 residues: Glutamyl-Q tRNA(Asp) synthetase (298 aa).

L-glutamate contacts are provided by residues 9–13 (RFAPS) and Glu45. A 'HIGH' region motif is present at residues 12-22 (PSPSGELHFGS). Zn(2+) contacts are provided by Cys101, Cys103, Tyr115, and Cys119. L-glutamate-binding residues include Tyr172 and Arg190. A 'KMSKS' region motif is present at residues 228 to 232 (KLSKQ). ATP is bound at residue Lys231.

It belongs to the class-I aminoacyl-tRNA synthetase family. GluQ subfamily. It depends on Zn(2+) as a cofactor.

Catalyzes the tRNA-independent activation of glutamate in presence of ATP and the subsequent transfer of glutamate onto a tRNA(Asp). Glutamate is transferred on the 2-amino-5-(4,5-dihydroxy-2-cyclopenten-1-yl) moiety of the queuosine in the wobble position of the QUC anticodon. The chain is Glutamyl-Q tRNA(Asp) synthetase from Salmonella typhi.